The chain runs to 315 residues: 4-diphosphocytidyl-2-C-methyl-D-erythritol kinase (315 aa).

The active site involves Lys-26. Residue 111-121 coordinates ATP; that stretch reads PLAGGLAGGSA. Asp-153 is an active-site residue.

The protein belongs to the GHMP kinase family. IspE subfamily.

It catalyses the reaction 4-CDP-2-C-methyl-D-erythritol + ATP = 4-CDP-2-C-methyl-D-erythritol 2-phosphate + ADP + H(+). It participates in isoprenoid biosynthesis; isopentenyl diphosphate biosynthesis via DXP pathway; isopentenyl diphosphate from 1-deoxy-D-xylulose 5-phosphate: step 3/6. Functionally, catalyzes the phosphorylation of the position 2 hydroxy group of 4-diphosphocytidyl-2C-methyl-D-erythritol. The chain is 4-diphosphocytidyl-2-C-methyl-D-erythritol kinase from Salinispora arenicola (strain CNS-205).